The following is a 202-amino-acid chain: MATLFDILNTLNNNNYFENCKRQCSINKSNKTIIDIIPPMDVTMTNDKLIIETELAGISKDHIEIDIKDSILTIQGEKKKNLNKQQQQLVIEKSTTSSTTLDSKEDEASIEEFEDDIKPKSKSTVTTTATKENKEDENKTKLSDKKFISERSFGNFKRYLDLTKVLYQLDLNSINTQFENGLLTITINKKLHYSNTIKININ.

Positions Lys31–Asn202 constitute a sHSP domain. Residues Thr96–Asn138 are disordered.

The protein belongs to the small heat shock protein (HSP20) family.

The sequence is that of Small heat shock protein hspG5 (hspG5) from Dictyostelium discoideum (Social amoeba).